Consider the following 258-residue polypeptide: Ubiquinone/menaquinone biosynthesis C-methyltransferase UbiE (258 aa).

The tract at residues 1-20 is disordered; it reads MSESRTSADGGMETSYGFRE. Residues T81, D102, and 130–131 each bind S-adenosyl-L-methionine; that span reads NA.

Belongs to the class I-like SAM-binding methyltransferase superfamily. MenG/UbiE family.

It carries out the reaction a 2-demethylmenaquinol + S-adenosyl-L-methionine = a menaquinol + S-adenosyl-L-homocysteine + H(+). It catalyses the reaction a 2-methoxy-6-(all-trans-polyprenyl)benzene-1,4-diol + S-adenosyl-L-methionine = a 5-methoxy-2-methyl-3-(all-trans-polyprenyl)benzene-1,4-diol + S-adenosyl-L-homocysteine + H(+). The protein operates within quinol/quinone metabolism; menaquinone biosynthesis; menaquinol from 1,4-dihydroxy-2-naphthoate: step 2/2. It functions in the pathway cofactor biosynthesis; ubiquinone biosynthesis. In terms of biological role, methyltransferase required for the conversion of demethylmenaquinol (DMKH2) to menaquinol (MKH2) and the conversion of 2-polyprenyl-6-methoxy-1,4-benzoquinol (DDMQH2) to 2-polyprenyl-3-methyl-6-methoxy-1,4-benzoquinol (DMQH2). The chain is Ubiquinone/menaquinone biosynthesis C-methyltransferase UbiE from Rhizobium etli (strain CIAT 652).